A 439-amino-acid polypeptide reads, in one-letter code: Ribosomal protein uS12 methylthiotransferase RimO (439 aa).

Residues K3 to P118 enclose the MTTase N-terminal domain. [4Fe-4S] cluster is bound by residues C12, C48, C81, C157, C161, and C164. Residues N143 to E370 enclose the Radical SAM core domain. The TRAM domain occupies E373–S438.

The protein belongs to the methylthiotransferase family. RimO subfamily. [4Fe-4S] cluster serves as cofactor.

Its subcellular location is the cytoplasm. It carries out the reaction L-aspartate(89)-[ribosomal protein uS12]-hydrogen + (sulfur carrier)-SH + AH2 + 2 S-adenosyl-L-methionine = 3-methylsulfanyl-L-aspartate(89)-[ribosomal protein uS12]-hydrogen + (sulfur carrier)-H + 5'-deoxyadenosine + L-methionine + A + S-adenosyl-L-homocysteine + 2 H(+). In terms of biological role, catalyzes the methylthiolation of an aspartic acid residue of ribosomal protein uS12. The chain is Ribosomal protein uS12 methylthiotransferase RimO from Leptospira borgpetersenii serovar Hardjo-bovis (strain JB197).